Consider the following 353-residue polypeptide: Protein RecA (353 aa).

Position 67–74 (67–74 (GPESSGKT)) interacts with ATP.

It belongs to the RecA family.

It is found in the cytoplasm. In terms of biological role, can catalyze the hydrolysis of ATP in the presence of single-stranded DNA, the ATP-dependent uptake of single-stranded DNA by duplex DNA, and the ATP-dependent hybridization of homologous single-stranded DNAs. It interacts with LexA causing its activation and leading to its autocatalytic cleavage. The polypeptide is Protein RecA (Salmonella agona (strain SL483)).